The following is a 1034-amino-acid chain: Ubiquitin-like-specific protease 2 (1034 aa).

6 disordered regions span residues 1–42, 71–110, 388–419, 731–800, 841–960, and 983–1034; these read MSAR…FRKD, IELS…HSSL, SHAV…DDAT, IDQS…PIRH, GVSS…DSLG, and SSPT…DEDP. Residues 19 to 33 are compositionally biased toward low complexity; the sequence is SSRASSPRSSASLPP. Positions 74 to 85 are enriched in acidic residues; it reads SDNDVDNNDEGE. The segment covering 743 to 756 has biased composition (low complexity); sequence TSEPPCSRSSSIST. Phosphoserine is present on Ser788. Polar residues-rich tracts occupy residues 845–856, 876–904, and 912–923; these read PIKNDQALSSTH, QLSS…VISD, and GVNSESKNTSGI. A Phosphoserine modification is found at Ser903. Phosphoserine is present on residues Ser983 and Ser984. Over residues 992 to 1017 the composition is skewed to polar residues; that stretch reads TSATSKGSNAQLLSNYGDENNQSQDS.

It belongs to the peptidase C48 family.

Insertion mutation in SMT4 confers temperature and benomyl sensitivity; high copy suppressor of a temperature sensitive mutation in MIF2. This is Ubiquitin-like-specific protease 2 (ULP2) from Saccharomyces cerevisiae (strain ATCC 204508 / S288c) (Baker's yeast).